The sequence spans 299 residues: Ectoine dioxygenase (299 aa).

A disordered region spans residues 1-40 (MTTTTTNVTDLYPTRGATEVATPRQDPVVWGSPDAPGPVS). Residue Gln133 coordinates L-ectoine. Position 139 (Lys139) interacts with 2-oxoglutarate. His150, Asp152, and His251 together coordinate Fe cation.

It belongs to the PhyH family. EctD subfamily. In terms of assembly, homodimer. The cofactor is Fe(2+).

It catalyses the reaction L-ectoine + 2-oxoglutarate + O2 = 5-hydroxyectoine + succinate + CO2. Functionally, involved in the biosynthesis of 5-hydroxyectoine, called compatible solute, which helps organisms to survive extreme osmotic stress by acting as a highly soluble organic osmolyte. Catalyzes the 2-oxoglutarate-dependent selective hydroxylation of L-ectoine to yield (4S,5S)-5-hydroxyectoine. In Streptomyces coelicolor (strain ATCC BAA-471 / A3(2) / M145), this protein is Ectoine dioxygenase.